A 561-amino-acid polypeptide reads, in one-letter code: DNA ligase B (561 aa).

Lys-125 acts as the N6-AMP-lysine intermediate in catalysis.

The protein belongs to the NAD-dependent DNA ligase family. LigB subfamily.

It catalyses the reaction NAD(+) + (deoxyribonucleotide)n-3'-hydroxyl + 5'-phospho-(deoxyribonucleotide)m = (deoxyribonucleotide)n+m + AMP + beta-nicotinamide D-nucleotide.. Its function is as follows. Catalyzes the formation of phosphodiester linkages between 5'-phosphoryl and 3'-hydroxyl groups in double-stranded DNA using NAD as a coenzyme and as the energy source for the reaction. The sequence is that of DNA ligase B from Salmonella arizonae (strain ATCC BAA-731 / CDC346-86 / RSK2980).